A 157-amino-acid chain; its full sequence is Protein Smg (157 aa).

It belongs to the Smg family.

This Enterobacter sp. (strain 638) protein is Protein Smg.